We begin with the raw amino-acid sequence, 657 residues long: Probable Xaa-Pro aminopeptidase P (657 aa).

Residues D453, D464, E562, and E576 each contribute to the Mn(2+) site.

The protein belongs to the peptidase M24B family. Mn(2+) is required as a cofactor.

It catalyses the reaction Release of any N-terminal amino acid, including proline, that is linked to proline, even from a dipeptide or tripeptide.. Functionally, catalyzes the removal of a penultimate prolyl residue from the N-termini of peptides. In Talaromyces stipitatus (strain ATCC 10500 / CBS 375.48 / QM 6759 / NRRL 1006) (Penicillium stipitatum), this protein is Probable Xaa-Pro aminopeptidase P (ampp).